A 129-amino-acid polypeptide reads, in one-letter code: Small ribosomal subunit protein uS11 (129 aa).

This sequence belongs to the universal ribosomal protein uS11 family. Part of the 30S ribosomal subunit. Interacts with proteins S7 and S18. Binds to IF-3.

Functionally, located on the platform of the 30S subunit, it bridges several disparate RNA helices of the 16S rRNA. Forms part of the Shine-Dalgarno cleft in the 70S ribosome. This is Small ribosomal subunit protein uS11 from Thermosipho africanus (strain TCF52B).